The following is a 728-amino-acid chain: Dynamin-like protein 1 (728 aa).

Residues 1-119 (MKELFQKIWQ…ILQEKVQSID (119 aa)) form an assembly domain, required for tetramerization region. The 284-residue stretch at 159–442 (QNLEFNIAIT…LYAGEKSKIA (284 aa)) folds into the Dynamin-type G domain. The tract at residues 169–176 (GVMNAGKS) is G1 motif. Residue 171–177 (MNAGKSS) coordinates GDP. Residues 195-196 (ET) form a G2 motif region. A G3 motif region spans residues 298-301 (DTPG). Residues 358-361 (TKAD) form a G4 motif region. Position 359 (Lys359) interacts with GDP. Position 388 (Glu388) is a region of interest, G5 motif. 400 to 402 (SAK) lines the GDP pocket. The interval 470 to 695 (ENKQGVSEEN…LESLEKVLQS (226 aa)) is required for liposome binding but not for tetramerization.

Belongs to the TRAFAC class dynamin-like GTPase superfamily. Dynamin/Fzo/YdjA family. In terms of assembly, forms a 2:2 heterotetramer with DLP1. DLP2 forms a central back-to-back dimer flanked on each side by a DLP1 subunit. In the crystal structures the 2 DLP1 subunits are in very different conformations.

The protein resides in the cytoplasm. It localises to the cytosol. It catalyses the reaction GTP + H2O = GDP + phosphate + H(+). In terms of biological role, the heterotetrameric DLP1(2)-DLP2(2) complex tethers liposomes and may mediate their fusion. Initial binding is probably mediated by DLP1, while DLP2 couples DLP1 subunits and increases the effective reach of the complex up to 45 nm. The role of the nucleotide is unknown. This subunit alone weakly binds to liposomes; GTP, GDP, GMPPCP and GMPPNP do not change heterotetramer binding. Tetramerization is required for GTPase activity, suggesting the GTPase domains (dynamin-type G) from DLP1 and DLP2 must dimerize to reconstitute the GTPase active site. The polypeptide is Dynamin-like protein 1 (Campylobacter jejuni subsp. jejuni serotype O:23/36 (strain 81-176)).